Consider the following 428-residue polypeptide: Enolase (428 aa).

Gln-163 serves as a coordination point for (2R)-2-phosphoglycerate. The Proton donor role is filled by Glu-205. 3 residues coordinate Mg(2+): Asp-242, Glu-285, and Asp-312. (2R)-2-phosphoglycerate contacts are provided by Lys-337, Arg-366, Ser-367, and Lys-388. Catalysis depends on Lys-337, which acts as the Proton acceptor.

The protein belongs to the enolase family. It depends on Mg(2+) as a cofactor.

The protein localises to the cytoplasm. The protein resides in the secreted. It localises to the cell surface. The enzyme catalyses (2R)-2-phosphoglycerate = phosphoenolpyruvate + H2O. It functions in the pathway carbohydrate degradation; glycolysis; pyruvate from D-glyceraldehyde 3-phosphate: step 4/5. In terms of biological role, catalyzes the reversible conversion of 2-phosphoglycerate (2-PG) into phosphoenolpyruvate (PEP). It is essential for the degradation of carbohydrates via glycolysis. The chain is Enolase from Moorella thermoacetica (strain ATCC 39073 / JCM 9320).